Reading from the N-terminus, the 235-residue chain is Urease accessory protein UreF (235 aa).

It belongs to the UreF family. As to quaternary structure, ureD, UreF and UreG form a complex that acts as a GTP-hydrolysis-dependent molecular chaperone, activating the urease apoprotein by helping to assemble the nickel containing metallocenter of UreC. The UreE protein probably delivers the nickel.

The protein resides in the cytoplasm. Its function is as follows. Required for maturation of urease via the functional incorporation of the urease nickel metallocenter. The protein is Urease accessory protein UreF of Pseudoalteromonas translucida (strain TAC 125).